Consider the following 293-residue polypeptide: Peptidoglycan deacetylase (293 aa).

Residues aspartate 14, histidine 86, and histidine 90 each contribute to the Zn(2+) site. The 248-residue stretch at 29–276 folds into the NodB homology domain; that stretch reads PDDISRGLFA…INKHEGVRWV (248 aa).

It belongs to the polysaccharide deacetylase family. As to quaternary structure, homotetramer.

The catalysed reaction is Deacetylation of xylans and xylo-oligosaccharides.. Its function is as follows. Catalyzes the N-deacetylation of peptidoglycan (PG), an important mechanism that appears to confer lysozyme resistance and to mitigate host immune detection; this likely contributes to pathogen persistence in the host. The exact nature of the residue in PG that is deacetylated has not been determined. Is also able to catalyze the deacetylation of acetylated xylan, and, to a lesser extent, that of chitin and chitosan. Therefore, this enzyme might play a role during infection, considering that xylan-containing carbohydrate structures are among those commonly consumed by humans. This Helicobacter pylori (strain ATCC 700392 / 26695) (Campylobacter pylori) protein is Peptidoglycan deacetylase (pgdA).